The primary structure comprises 67 residues: MNVKTVKCPSCGKPVPWVPESRYRPFCSERCKQIDLGAWAAEQYTIPVVEEDDLPDAPGNDTSGKLN.

Positions 8, 11, 27, and 31 each coordinate Zn(2+).

Belongs to the DNA gyrase inhibitor YacG family. In terms of assembly, interacts with GyrB. The cofactor is Zn(2+).

In terms of biological role, inhibits all the catalytic activities of DNA gyrase by preventing its interaction with DNA. Acts by binding directly to the C-terminal domain of GyrB, which probably disrupts DNA binding by the gyrase. The chain is DNA gyrase inhibitor YacG from Ralstonia pickettii (strain 12J).